Here is a 193-residue protein sequence, read N- to C-terminus: ATP-dependent Clp protease proteolytic subunit 1 (193 aa).

Residue serine 99 is the Nucleophile of the active site. Residue histidine 124 is part of the active site.

Belongs to the peptidase S14 family. In terms of assembly, fourteen ClpP subunits assemble into 2 heptameric rings which stack back to back to give a disk-like structure with a central cavity, resembling the structure of eukaryotic proteasomes.

It is found in the cytoplasm. The catalysed reaction is Hydrolysis of proteins to small peptides in the presence of ATP and magnesium. alpha-casein is the usual test substrate. In the absence of ATP, only oligopeptides shorter than five residues are hydrolyzed (such as succinyl-Leu-Tyr-|-NHMec, and Leu-Tyr-Leu-|-Tyr-Trp, in which cleavage of the -Tyr-|-Leu- and -Tyr-|-Trp bonds also occurs).. In terms of biological role, cleaves peptides in various proteins in a process that requires ATP hydrolysis. Has a chymotrypsin-like activity. Plays a major role in the degradation of misfolded proteins. The protein is ATP-dependent Clp protease proteolytic subunit 1 of Shouchella clausii (strain KSM-K16) (Alkalihalobacillus clausii).